The chain runs to 55 residues: uncharacterized protein (55 aa).

Residues 1–30 (MDKPTVETSAAPVETLVLTEPPAETQAEDS) form a disordered region.

This is an uncharacterized protein from Frog virus 3 (isolate Goorha) (FV-3).